The following is a 154-amino-acid chain: OCIA domain-containing protein 2 (154 aa).

Residues 1–120 (MASVSTHGNQ…HSFEDQLRGA (120 aa)) form the OCIA domain. The residue at position 41 (K41) is an N6-acetyllysine.

As to quaternary structure, interacts (via OCIA domain) with OCIAD1/ASRIJ and STAT3. In terms of tissue distribution, abundant in kidney, liver and brain.

The protein localises to the endosome. The protein resides in the mitochondrion. It localises to the mitochondrion inner membrane. In terms of biological role, has an essential role in the assembly of mitochondrial respiratory chain complex III. Is also required for STAT3 activation and plays a role in cell migration. In Mus musculus (Mouse), this protein is OCIA domain-containing protein 2 (Ociad2).